The sequence spans 395 residues: Chaperone protein DnaJ 2 (395 aa).

The J domain maps to 10–75 (NYYADLGVSS…KKRKEYDELK (66 aa)). The segment at 165-242 (GTTIPVELTG…CHGRGTVRKS (78 aa)) adopts a CR-type zinc-finger fold. Zn(2+)-binding residues include Cys178, Cys181, Cys194, Cys197, Cys216, Cys219, Cys230, and Cys233. CXXCXGXG motif repeat units lie at residues 178–185 (CNTCHGSG), 194–201 (CGTCDGTG), 216–223 (CATCGGTG), and 230–237 (CDNCHGRG).

Belongs to the DnaJ family. Homodimer. The cofactor is Zn(2+).

The protein localises to the cytoplasm. Participates actively in the response to hyperosmotic and heat shock by preventing the aggregation of stress-denatured proteins and by disaggregating proteins, also in an autonomous, DnaK-independent fashion. Unfolded proteins bind initially to DnaJ; upon interaction with the DnaJ-bound protein, DnaK hydrolyzes its bound ATP, resulting in the formation of a stable complex. GrpE releases ADP from DnaK; ATP binding to DnaK triggers the release of the substrate protein, thus completing the reaction cycle. Several rounds of ATP-dependent interactions between DnaJ, DnaK and GrpE are required for fully efficient folding. Also involved, together with DnaK and GrpE, in the DNA replication of plasmids through activation of initiation proteins. In Corynebacterium glutamicum (strain ATCC 13032 / DSM 20300 / JCM 1318 / BCRC 11384 / CCUG 27702 / LMG 3730 / NBRC 12168 / NCIMB 10025 / NRRL B-2784 / 534), this protein is Chaperone protein DnaJ 2.